Consider the following 433-residue polypeptide: Serine hydroxymethyltransferase (433 aa).

Residues L132 and 136 to 138 each bind (6S)-5,6,7,8-tetrahydrofolate; that span reads GHL. K241 carries the N6-(pyridoxal phosphate)lysine modification.

Belongs to the SHMT family. As to quaternary structure, homodimer. The cofactor is pyridoxal 5'-phosphate.

Its subcellular location is the cytoplasm. The catalysed reaction is (6R)-5,10-methylene-5,6,7,8-tetrahydrofolate + glycine + H2O = (6S)-5,6,7,8-tetrahydrofolate + L-serine. It functions in the pathway one-carbon metabolism; tetrahydrofolate interconversion. The protein operates within amino-acid biosynthesis; glycine biosynthesis; glycine from L-serine: step 1/1. Its function is as follows. Catalyzes the reversible interconversion of serine and glycine with tetrahydrofolate (THF) serving as the one-carbon carrier. This reaction serves as the major source of one-carbon groups required for the biosynthesis of purines, thymidylate, methionine, and other important biomolecules. Also exhibits THF-independent aldolase activity toward beta-hydroxyamino acids, producing glycine and aldehydes, via a retro-aldol mechanism. This Rhodopseudomonas palustris (strain BisA53) protein is Serine hydroxymethyltransferase.